The chain runs to 317 residues: uncharacterized protein (317 aa).

7 helical membrane-spanning segments follow: residues 18–38, 58–78, 92–112, 130–150, 165–185, 202–222, and 253–273; these read WWIISLVVAFLPLGLHGLIII, IIFGWLLFFFWFNIVVNGFIF, FLGHFIYSGGEQFGGVSWWSV, LFATSFLLTASTSIYELAFGV, QPLSILFALVFKLLPIVKGEL, LAFLNPVKLKTLFIPVLLSTV, and LWGGIVFLGLFVLLSCLLMVN.

This sequence belongs to the CbiQ family.

Its subcellular location is the cell membrane. This is an uncharacterized protein from Mycoplasma pneumoniae (strain ATCC 29342 / M129 / Subtype 1) (Mycoplasmoides pneumoniae).